The following is a 245-amino-acid chain: Outer dense fiber protein 1 (245 aa).

Ser5 and Ser10 each carry phosphoserine. Repeat unit 1 spans residues Arg34–Asp38. The tract at residues Arg34–Asp78 is 2 X 5 AA repeats of [RC]-C-L-C-D. At Ser64 the chain carries Phosphoserine. Residues Cys74 to Asp78 form repeat 2. Ser87, Ser108, Ser109, Ser137, Ser153, Ser175, and Ser180 each carry phosphoserine. Positions Cys195–Pro233 are C-X-P repeat region.

In terms of assembly, interacts (via leucine zipper motif) with TCP11. Interacts with SPAG4. Interacts with KLC3. Interacts with CCDC42. As to expression, testis. Specifically located to the round spermatid layer and to the luminally-oriented cytoplasm of elongated spermatids.

The protein resides in the cell projection. It is found in the cilium. It localises to the flagellum. The protein localises to the cytoplasm. Its subcellular location is the cytoskeleton. The protein resides in the microtubule organizing center. It is found in the centrosome. In terms of biological role, component of the outer dense fibers (ODF) of spermatozoa. ODF are filamentous structures located on the outside of the axoneme in the midpiece and principal piece of the mammalian sperm tail and may help to maintain the passive elastic structures and elastic recoil of the sperm tail. This Rattus norvegicus (Rat) protein is Outer dense fiber protein 1 (Odf1).